The primary structure comprises 316 residues: Annexin D7 (316 aa).

A2 is modified (N-acetylalanine). 4 Annexin repeats span residues 11 to 82, 83 to 154, 166 to 237, and 241 to 312; these read PLPE…LWTF, EPAE…PLVS, TLAR…AVIK, and YPEK…ALLG. Ca(2+) is bound by residues F24, G26, G28, and E68. Residue S95 is modified to Phosphoserine. T100 and T112 each carry phosphothreonine. Phosphotyrosine is present on Y129. Ca(2+)-binding residues include I254 and G258. Phosphotyrosine is present on Y283. Position 288 is a phosphoserine (S288). Positions 298, 299, and 304 each coordinate Ca(2+).

This sequence belongs to the annexin (TC 1.A.31.1) family. Expressed in flowers.

This Arabidopsis thaliana (Mouse-ear cress) protein is Annexin D7 (ANNAT7).